A 276-amino-acid polypeptide reads, in one-letter code: Rhamnulose-1-phosphate aldolase (276 aa).

Glutamate 117 is a catalytic residue. Zn(2+)-binding residues include histidine 141, histidine 143, and histidine 212.

Belongs to the aldolase class II family. RhaD subfamily. Homotetramer. The cofactor is Zn(2+).

It is found in the cytoplasm. It carries out the reaction L-rhamnulose 1-phosphate = (S)-lactaldehyde + dihydroxyacetone phosphate. The protein operates within carbohydrate degradation; L-rhamnose degradation; glycerone phosphate from L-rhamnose: step 3/3. In terms of biological role, catalyzes the reversible cleavage of L-rhamnulose-1-phosphate to dihydroxyacetone phosphate (DHAP) and L-lactaldehyde. This is Rhamnulose-1-phosphate aldolase from Klebsiella pneumoniae (strain 342).